Reading from the N-terminus, the 185-residue chain is Probable chorismate pyruvate-lyase 2 (185 aa).

Substrate contacts are provided by Arg-80, Leu-118, and Glu-170.

It belongs to the UbiC family.

It is found in the cytoplasm. The enzyme catalyses chorismate = 4-hydroxybenzoate + pyruvate. The protein operates within cofactor biosynthesis; ubiquinone biosynthesis. In terms of biological role, removes the pyruvyl group from chorismate, with concomitant aromatization of the ring, to provide 4-hydroxybenzoate (4HB) for the ubiquinone pathway. This chain is Probable chorismate pyruvate-lyase 2, found in Pseudomonas entomophila (strain L48).